The primary structure comprises 453 residues: D-aminoacyl-tRNA deacylase (453 aa).

The interval 428 to 453 (VRADVALHERPRERVRRPSDDEGKGN) is disordered.

The protein belongs to the DtdA deacylase family. In terms of assembly, monomer. Zn(2+) serves as cofactor.

It carries out the reaction a D-aminoacyl-tRNA + H2O = a tRNA + a D-alpha-amino acid + H(+). The enzyme catalyses glycyl-tRNA(Ala) + H2O = tRNA(Ala) + glycine + H(+). D-aminoacyl-tRNA deacylase with broad substrate specificity. By recycling D-aminoacyl-tRNA to D-amino acids and free tRNA molecules, this enzyme counteracts the toxicity associated with the formation of D-aminoacyl-tRNA entities in vivo. The chain is D-aminoacyl-tRNA deacylase from Halobacterium salinarum (strain ATCC 29341 / DSM 671 / R1).